We begin with the raw amino-acid sequence, 174 residues long: Small ribosomal subunit protein uS5 (174 aa).

In terms of domain architecture, S5 DRBM spans 16–79 (LSELLVSVRR…NAAKKSMIRV (64 aa)).

The protein belongs to the universal ribosomal protein uS5 family. In terms of assembly, part of the 30S ribosomal subunit. Contacts proteins S4 and S8.

Functionally, with S4 and S12 plays an important role in translational accuracy. Located at the back of the 30S subunit body where it stabilizes the conformation of the head with respect to the body. This is Small ribosomal subunit protein uS5 from Anaplasma marginale (strain Florida).